Reading from the N-terminus, the 828-residue chain is Periplasmic nitrate reductase (828 aa).

Residues 1-31 (MKLSRRHFMKANAVAAAAAVAGITIPIAVRA) constitute a signal peptide (tat-type signal). The 4Fe-4S Mo/W bis-MGD-type domain maps to 39 to 95 (IHWDKAPCRFCGVGCGVLVGTQNGRIVASQGDPDAPVNRGLNCIKGYFLPKIMYGQD). [4Fe-4S] cluster contacts are provided by C46, C49, C53, and C81. Mo-bis(molybdopterin guanine dinucleotide)-binding positions include K83, Q150, N175, C179, 212–219 (WGSNMAEM), 243–247 (STYQH), 262–264 (QTD), M372, Q376, N482, 508–509 (SD), K531, D558, and 718–727 (TGRVLEHWHT). F794 serves as a coordination point for substrate. 2 residues coordinate Mo-bis(molybdopterin guanine dinucleotide): N802 and K819.

The protein belongs to the prokaryotic molybdopterin-containing oxidoreductase family. NasA/NapA/NarB subfamily. In terms of assembly, component of the periplasmic nitrate reductase NapAB complex composed of NapA and NapB. [4Fe-4S] cluster is required as a cofactor. It depends on Mo-bis(molybdopterin guanine dinucleotide) as a cofactor. In terms of processing, predicted to be exported by the Tat system. The position of the signal peptide cleavage has not been experimentally proven.

The protein localises to the periplasm. It catalyses the reaction 2 Fe(II)-[cytochrome] + nitrate + 2 H(+) = 2 Fe(III)-[cytochrome] + nitrite + H2O. Its function is as follows. Catalytic subunit of the periplasmic nitrate reductase complex NapAB. Receives electrons from NapB and catalyzes the reduction of nitrate to nitrite. This is Periplasmic nitrate reductase from Pectobacterium carotovorum subsp. carotovorum (strain PC1).